A 473-amino-acid chain; its full sequence is Probable glycine dehydrogenase (decarboxylating) subunit 2 (473 aa).

Lys266 is subject to N6-(pyridoxal phosphate)lysine.

This sequence belongs to the GcvP family. C-terminal subunit subfamily. The glycine cleavage system is composed of four proteins: P, T, L and H. In this organism, the P 'protein' is a heterodimer of two subunits. The cofactor is pyridoxal 5'-phosphate.

It catalyses the reaction N(6)-[(R)-lipoyl]-L-lysyl-[glycine-cleavage complex H protein] + glycine + H(+) = N(6)-[(R)-S(8)-aminomethyldihydrolipoyl]-L-lysyl-[glycine-cleavage complex H protein] + CO2. Functionally, the glycine cleavage system catalyzes the degradation of glycine. The P protein binds the alpha-amino group of glycine through its pyridoxal phosphate cofactor; CO(2) is released and the remaining methylamine moiety is then transferred to the lipoamide cofactor of the H protein. The sequence is that of Probable glycine dehydrogenase (decarboxylating) subunit 2 from Thermus thermophilus (strain ATCC BAA-163 / DSM 7039 / HB27).